Here is a 210-residue protein sequence, read N- to C-terminus: Leucyl/phenylalanyl-tRNA--protein transferase (210 aa).

It belongs to the L/F-transferase family.

Its subcellular location is the cytoplasm. The enzyme catalyses N-terminal L-lysyl-[protein] + L-leucyl-tRNA(Leu) = N-terminal L-leucyl-L-lysyl-[protein] + tRNA(Leu) + H(+). The catalysed reaction is N-terminal L-arginyl-[protein] + L-leucyl-tRNA(Leu) = N-terminal L-leucyl-L-arginyl-[protein] + tRNA(Leu) + H(+). It carries out the reaction L-phenylalanyl-tRNA(Phe) + an N-terminal L-alpha-aminoacyl-[protein] = an N-terminal L-phenylalanyl-L-alpha-aminoacyl-[protein] + tRNA(Phe). Functions in the N-end rule pathway of protein degradation where it conjugates Leu, Phe and, less efficiently, Met from aminoacyl-tRNAs to the N-termini of proteins containing an N-terminal arginine or lysine. The polypeptide is Leucyl/phenylalanyl-tRNA--protein transferase (Roseobacter denitrificans (strain ATCC 33942 / OCh 114) (Erythrobacter sp. (strain OCh 114))).